We begin with the raw amino-acid sequence, 392 residues long: MFQIGEALMGQGSELAHVDLMIGDKGGPVGQAFANGLTQLSAGHTPLLSVIRPNLPPKPSTLIIPKVTVKNMDQAARIFGPAQSAVAKAVADSVEEGVIPKDQVEDLVIVASVFIHPEAQDYNKIYRYNYGATKLAIKRALEGFPDIDTVLEESNKSTHAIMGFKVTRLWDPPYLQIAFDNPNLEFVLSAISEIPKSDHVIIEAGTPLIKRYGTDVISKIRQVRPDAFIVADLKTLDTGNLEARMVADAAGDAIVVSALAPISTIDKLIEEAHKTGIYAVMDTLNQQDPISVLKQLKVMPDVIELHRGIDIEGTEHAWGNIGEIKKIAPKALVAVAGGVRLDKVPVALSQGADILVVGRAITNAKDVREMAEQFINSLNKPEIDQFRVMTDF.

The interval 1–161 (MFQIGEALMG…EESNKSTHAI (161 aa)) is formaldehyde-activating enzyme. His-17 (proton donor) is an active-site residue. Residues Asp-19, Leu-48, Lys-66, Thr-68, and Gln-83 each coordinate substrate. A 3-hexulose-6-phosphate synthase region spans residues 162–392 (MGFKVTRLWD…IDQFRVMTDF (231 aa)).

In the N-terminal section; belongs to the formaldehyde-activating enzyme family. It in the C-terminal section; belongs to the HPS/KGPDC family. HPS subfamily.

The catalysed reaction is 5,6,7,8-tetrahydromethanopterin + formaldehyde = 5,10-methylenetetrahydromethanopterin + H2O. It carries out the reaction D-ribulose 5-phosphate + formaldehyde = D-arabino-hex-3-ulose 6-phosphate. It functions in the pathway carbohydrate biosynthesis; D-ribose 5-phosphate biosynthesis. In terms of biological role, catalyzes the condensation of formaldehyde with tetrahydromethanopterin (H(4)MPT) to 5,10-methylenetetrahydromethanopterin. Functionally, catalyzes the reversible formation of ribulose-5-phosphate and formaldehyde from 3-hexulose-6-phosphate. This is Bifunctional enzyme Fae/Hps from Methanosarcina mazei (strain ATCC BAA-159 / DSM 3647 / Goe1 / Go1 / JCM 11833 / OCM 88) (Methanosarcina frisia).